The sequence spans 140 residues: Transcription antitermination protein NusB (140 aa).

This sequence belongs to the NusB family.

Involved in transcription antitermination. Required for transcription of ribosomal RNA (rRNA) genes. Binds specifically to the boxA antiterminator sequence of the ribosomal RNA (rrn) operons. The protein is Transcription antitermination protein NusB of Sorangium cellulosum (strain So ce56) (Polyangium cellulosum (strain So ce56)).